The chain runs to 239 residues: Protein-S-isoprenylcysteine O-methyltransferase (239 aa).

The Cytoplasmic segment spans residues 1–23; it reads MHQDFQEDEHEYPDIRRNPLHEV. A helical membrane pass occupies residues 24-44; the sequence is TMTSYILGILLGIFVGLFPQI. Topologically, residues 45–47 are lumenal; that stretch reads RFK. A helical membrane pass occupies residues 48–68; the sequence is NFNLFIIALSLFHFLEYYITA. Over 69–88 the chain is Cytoplasmic; that stretch reads KYNPLKVHSESFLLNNGKSY. Residues 89 to 109 form a helical membrane-spanning segment; sequence MAAHSFAILECLVESFLFPDL. Position 110 (lysine 110) is a topological domain, lumenal. A helical membrane pass occupies residues 111–131; that stretch reads IFSYSLATKLCTVLGCLLVIL. Over 132-175 the chain is Cytoplasmic; it reads GQYTRTIAMHTAGHSFSHIVKTKKESDHVLVKTGVYSWSRHPSY. Residues 159–162, tyrosine 167, and 172–175 contribute to the S-adenosyl-L-methionine site; these read HVLV and HPSY. The helical intramembrane region spans 176–206; sequence LGFFWWAIGTQLLLLNPLSLVIFIFVLWKFF. Residues 207-239 lie on the Cytoplasmic side of the membrane; it reads SDRIRVEEKYLIEFFSAEYIEYKNKVGVGIPFI. Arginine 209 provides a ligand contact to substrate. Glutamate 213 contacts S-adenosyl-L-methionine.

It belongs to the class VI-like SAM-binding methyltransferase superfamily. Isoprenylcysteine carboxyl methyltransferase family.

The protein resides in the endoplasmic reticulum membrane. It catalyses the reaction [protein]-C-terminal S-[(2E,6E)-farnesyl]-L-cysteine + S-adenosyl-L-methionine = [protein]-C-terminal S-[(2E,6E)-farnesyl]-L-cysteine methyl ester + S-adenosyl-L-homocysteine. Functionally, mediates C-terminal methylation of the isoprenylated C-terminal cysteine in A-factor mating pheromone and Ras proteins. Does not have a preference for the farnesyl or geranylgeranyl moieties in the model substrates N-acetyl-S-farnesyl-L-cysteine (AFC) and N-acetyl-S-geranylgeranyl-L-cysteine (AGGC) in vitro. This is Protein-S-isoprenylcysteine O-methyltransferase (STE14) from Saccharomyces cerevisiae (strain ATCC 204508 / S288c) (Baker's yeast).